A 689-amino-acid polypeptide reads, in one-letter code: MDIKDYYCVETKDSKQPGESYIYRSIHSAGKLLDTPEDGVSTVYDLLCTAAKNHGEKQAMGSRKLIKENREEREIIRKVDNEEVVEKKLWTTYELGPYEYISFNKVYEIALALGSGLVASGITSETTMLFFAATSAKWFTTAQGCSSQAIPIVTAYETLGEDGIYTSLDECKSRAIFTDPNLIPKLLGPLKQSTWVKLIVCSSTPSEDLVELVKSTAPDVEIITYDNLLSLGKEKPQPPHPPKADDICCYMYTSGSTGKPKGVVLLHRNIIAALGGINRILSQHINVKDYVLAYLPLAHIFEFIFEMCCLYWGGVLGYASPRTLTDASVVNCKGDLTEFRPTVLIGVPAVYELIKKGILAKVSSMPAHRQKVFSGSLSLKQYLIERNLPGSAALDAIVFNKVKAATGGRLRYCISGGAALAASTQAFLSSCICPVLPGYGLTETCAGSFVLSPEQWHLYANTVGFPIPSIEFKLVDIPDLGYYTDSSPPRGEVWIRGPAVCNGYLNRPEDNKAAFTEDGWFKTGDVGEIAKGNTLRLIDRKKNIVKSLNGEYIALEKIEAQFFTSPLVSNVCAYADVNHAKPVVIVNPDENGLRTYLTKNSGSSFNGNPNDTLTNLCKDSGVQHLILKELINIGKQQRLASIEIPEGVVLSDFEWTAENNFLTASRKVKRQVIVAHYSDEIQKAYSKKH.

Position 252 to 263 (252 to 263 (YTSGSTGKPKGV)) interacts with ATP. The short motif at 518-567 (DGWFKTGDVGEIAKGNTLRLIDRKKNIVKSLNGEYIALEKIEAQFFTSPL) is the FACS element.

The protein belongs to the ATP-dependent AMP-binding enzyme family. Mg(2+) serves as cofactor.

The protein resides in the golgi apparatus. Its subcellular location is the vacuole membrane. It carries out the reaction a long-chain fatty acid + ATP + CoA = a long-chain fatty acyl-CoA + AMP + diphosphate. Esterification, concomitant with transport, of endogenous long-chain fatty acids into metabolically active CoA thioesters for subsequent degradation or incorporation into phospholipids. Plays an important role in the determination of viability in the stationary phase. This is Long-chain-fatty-acid--CoA ligase 2 (lcf2) from Schizosaccharomyces pombe (strain 972 / ATCC 24843) (Fission yeast).